The chain runs to 170 residues: Peptide deformylase (170 aa).

Positions 88 and 130 each coordinate Fe cation. Residue E131 is part of the active site. H134 is a binding site for Fe cation.

It belongs to the polypeptide deformylase family. It depends on Fe(2+) as a cofactor.

It carries out the reaction N-terminal N-formyl-L-methionyl-[peptide] + H2O = N-terminal L-methionyl-[peptide] + formate. In terms of biological role, removes the formyl group from the N-terminal Met of newly synthesized proteins. Requires at least a dipeptide for an efficient rate of reaction. N-terminal L-methionine is a prerequisite for activity but the enzyme has broad specificity at other positions. The protein is Peptide deformylase of Acetivibrio thermocellus (strain ATCC 27405 / DSM 1237 / JCM 9322 / NBRC 103400 / NCIMB 10682 / NRRL B-4536 / VPI 7372) (Clostridium thermocellum).